A 70-amino-acid polypeptide reads, in one-letter code: Large ribosomal subunit protein eL38 (70 aa).

This sequence belongs to the eukaryotic ribosomal protein eL38 family.

The sequence is that of Large ribosomal subunit protein eL38 (RpL38) from Bombyx mori (Silk moth).